The chain runs to 131 residues: NADPH-dependent 7-cyano-7-deazaguanine reductase (131 aa).

Cys48 acts as the Thioimide intermediate in catalysis. Asp55 acts as the Proton donor in catalysis. Substrate-binding positions include 70–72 (VEL) and 89–90 (QE).

This sequence belongs to the GTP cyclohydrolase I family. QueF type 1 subfamily.

It is found in the cytoplasm. The enzyme catalyses 7-aminomethyl-7-carbaguanine + 2 NADP(+) = 7-cyano-7-deazaguanine + 2 NADPH + 3 H(+). Its pathway is tRNA modification; tRNA-queuosine biosynthesis. Catalyzes the NADPH-dependent reduction of 7-cyano-7-deazaguanine (preQ0) to 7-aminomethyl-7-deazaguanine (preQ1). This is NADPH-dependent 7-cyano-7-deazaguanine reductase from Caldicellulosiruptor bescii (strain ATCC BAA-1888 / DSM 6725 / KCTC 15123 / Z-1320) (Anaerocellum thermophilum).